Here is a 443-residue protein sequence, read N- to C-terminus: uncharacterized protein (443 aa).

Residues Met-1–Met-21 form a disordered region. Positions Gln-10–Asp-20 are enriched in polar residues.

This is an uncharacterized protein from Caenorhabditis elegans.